The primary structure comprises 168 residues: uncharacterized protein (168 aa).

The chain crosses the membrane as a helical span at residues 5 to 24 (IAWASACLLLVMLTGFFTIG).

Its subcellular location is the membrane. This is an uncharacterized protein from Bacillus subtilis (strain 168).